The sequence spans 983 residues: Protein translocase subunit SecA (983 aa).

Residues glutamine 83, 101–105, and aspartate 489 each bind ATP; that span reads GEGKT. The disordered stretch occupies residues 948–983; the sequence is ISSEEEDNNEKTNINNNEDLERTKGEAQQTAKNPNE. The span at 973–983 shows a compositional bias: polar residues; that stretch reads EAQQTAKNPNE.

It belongs to the SecA family. As to quaternary structure, monomer and homodimer. Part of the essential Sec protein translocation apparatus which comprises SecA, SecYEG and auxiliary proteins SecDF. Other proteins may also be involved.

The protein resides in the cell membrane. It localises to the cytoplasm. It catalyses the reaction ATP + H2O + cellular proteinSide 1 = ADP + phosphate + cellular proteinSide 2.. Its function is as follows. Part of the Sec protein translocase complex. Interacts with the SecYEG preprotein conducting channel. Has a central role in coupling the hydrolysis of ATP to the transfer of proteins into and across the cell membrane, serving as an ATP-driven molecular motor driving the stepwise translocation of polypeptide chains across the membrane. The polypeptide is Protein translocase subunit SecA (Mesomycoplasma hyopneumoniae (strain 232) (Mycoplasma hyopneumoniae)).